The sequence spans 354 residues: S-adenosylmethionine:tRNA ribosyltransferase-isomerase (354 aa).

Belongs to the QueA family. As to quaternary structure, monomer.

It is found in the cytoplasm. The catalysed reaction is 7-aminomethyl-7-carbaguanosine(34) in tRNA + S-adenosyl-L-methionine = epoxyqueuosine(34) in tRNA + adenine + L-methionine + 2 H(+). It functions in the pathway tRNA modification; tRNA-queuosine biosynthesis. Functionally, transfers and isomerizes the ribose moiety from AdoMet to the 7-aminomethyl group of 7-deazaguanine (preQ1-tRNA) to give epoxyqueuosine (oQ-tRNA). This chain is S-adenosylmethionine:tRNA ribosyltransferase-isomerase, found in Salmonella newport (strain SL254).